Consider the following 419-residue polypeptide: L-rhamnose isomerase (419 aa).

H262, D294, and D296 together coordinate Mn(2+).

Belongs to the rhamnose isomerase family. As to quaternary structure, homotetramer. Mn(2+) serves as cofactor.

Its subcellular location is the cytoplasm. The enzyme catalyses L-rhamnopyranose = L-rhamnulose. The protein operates within carbohydrate degradation; L-rhamnose degradation; glycerone phosphate from L-rhamnose: step 1/3. Its function is as follows. Catalyzes the interconversion of L-rhamnose and L-rhamnulose. In Salmonella gallinarum (strain 287/91 / NCTC 13346), this protein is L-rhamnose isomerase.